A 1642-amino-acid polypeptide reads, in one-letter code: Cholesterol transporter ABCA5 (1642 aa).

The helical transmembrane segment at 32 to 52 (SVQEILFPLFFLFWLILISMM) threads the bilayer. Asn-86 carries an N-linked (GlcNAc...) asparagine glycan. The next 6 membrane-spanning stretches (helical) occupy residues 220–240 (VILI…AIHI), 264–284 (LSWV…MAVI), 297–317 (IVIF…ALML), 328–348 (GIVE…IILI), 355–375 (LVWL…AQVM), and 396–416 (LIIT…LAVY). Residue Asn-458 is glycosylated (N-linked (GlcNAc...) asparagine). An ABC transporter 1 domain is found at 478–713 (IRISGIQKTY…WGIGYRLSMY (236 aa)). Position 514–521 (514–521 (GHSGTGKS)) interacts with ATP. Helical transmembrane passes span 866–886 (LLLL…HHSF) and 967–987 (VFAA…VNII). Asn-996 carries an N-linked (GlcNAc...) asparagine glycan. 6 helical membrane-spanning segments follow: residues 1021 to 1041 (LYFQ…YFAM), 1071 to 1091 (VVDI…LLAF), 1102 to 1122 (FLAV…FTYI), 1139 to 1159 (FIYS…FFMG), 1169 to 1189 (AFCI…FIKI), and 1207 to 1227 (LSVA…LLQY). The tract at residues 1249 to 1268 (KSKNRKLPEPPDNEDEDEDV) is disordered. Positions 1259-1268 (PDNEDEDEDV) are enriched in acidic residues. The region spanning 1290–1533 (IMVSNLHKEY…FGKGYFLEIK (244 aa)) is the ABC transporter 2 domain. Residue 1333–1340 (GPNGAGKS) coordinates ATP.

It belongs to the ABC transporter superfamily. ABCA family. Post-translationally, N-glycosylated. Ubiquitously expressed. Highly expressed in testis, skeletal muscle, kidney, liver and placenta. Expressed in both the epithelial and mesenchymal compartments, present within the outer root sheath (ORS) of the hair follicle as well as dermal sheath. Expressed in multiple regions of the brain, including the hippocampus, superior frontal and inferior temporal cortices. Strongly expressed in neurons and moderately in microglia, with only weak expression in astrocytes and oligodendrocytes.

It is found in the golgi apparatus membrane. Its subcellular location is the lysosome membrane. It localises to the late endosome membrane. The protein resides in the cell membrane. The enzyme catalyses cholesterol(in) + ATP + H2O = cholesterol(out) + ADP + phosphate + H(+). Functionally, cholesterol efflux transporter in macrophages that is responsible for APOAI/high-density lipoproteins (HDL) formation at the plasma membrane under high cholesterol levels and participates in reverse cholesterol transport. May play a role in the processing of autolysosomes. This chain is Cholesterol transporter ABCA5, found in Homo sapiens (Human).